The following is a 97-amino-acid chain: Citrate lyase acyl carrier protein (97 aa).

O-(phosphoribosyl dephospho-coenzyme A)serine is present on S14.

It belongs to the CitD family. As to quaternary structure, oligomer with a subunit composition of (alpha,beta,gamma)6.

It is found in the cytoplasm. In terms of biological role, covalent carrier of the coenzyme of citrate lyase. This chain is Citrate lyase acyl carrier protein, found in Enterobacter sp. (strain 638).